A 1194-amino-acid polypeptide reads, in one-letter code: Phosphatidylinositol-3,5-bisphosphate 3-phosphatase MTMR3 (1194 aa).

Serine 4 is modified (phosphoserine). The region spanning 151–572 (EHVTSRFKNE…RNLMLWSAVY (422 aa)) is the Myotubularin phosphatase domain. Asparagine 322, asparagine 347, and isoleucine 348 together coordinate a 1,2-diacyl-sn-glycero-3-phospho-(1D-myo-inositol-3,5-bisphosphate). Residues asparagine 322, asparagine 347, and isoleucine 348 each contribute to the a 1,2-diacyl-sn-glycero-3-phospho-(1D-myo-inositol-3-phosphate) site. Cysteine 409 acts as the Phosphocysteine intermediate in catalysis. A 1,2-diacyl-sn-glycero-3-phospho-(1D-myo-inositol-3,5-bisphosphate)-binding residues include serine 410, aspartate 411, glycine 412, tryptophan 413, aspartate 414, arginine 415, lysine 451, and arginine 455. Serine 410, aspartate 411, glycine 412, tryptophan 413, aspartate 414, and arginine 415 together coordinate a 1,2-diacyl-sn-glycero-3-phospho-(1D-myo-inositol-3-phosphate). Arginine 455 contributes to the a 1,2-diacyl-sn-glycero-3-phospho-(1D-myo-inositol-3-phosphate) binding site. A disordered region spans residues 583–609 (DDSCAPYPAPGTSPDEPPLSRLPKTRS). Residues 589 to 599 (YPAPGTSPDEP) are compositionally biased toward pro residues. Phosphoserine is present on residues serine 609, serine 629, serine 643, and serine 647. Over residues 693 to 724 (TKEESGVEEPTHREHTEVPEVKEEAPLAKESR) the composition is skewed to basic and acidic residues. Disordered regions lie at residues 693–731 (TKEE…QGSG), 852–871 (ESGP…RFSG), and 876–897 (PIAP…HRTS). Phosphothreonine is present on threonine 725. At serine 904 the chain carries Phosphoserine. Disordered stretches follow at residues 932–971 (NKAS…HQLS) and 988–1017 (KWLN…DGMP). A compositionally biased stretch (polar residues) spans 991–1006 (NSHSGRPSTTNSPEQP). Residues 1025–1058 (QRLRQIESGHQQEVETLKKQVQELKSRLESQYLT) are a coiled coil. Serine 1060 carries the phosphoserine modification. Residues 1115 to 1175 (DHLAAHCYAC…VCKSCYSSLH (61 aa)) form an FYVE-type zinc finger. Zn(2+)-binding residues include cysteine 1121, cysteine 1124, cysteine 1137, cysteine 1140, cysteine 1145, cysteine 1148, cysteine 1167, and cysteine 1170.

This sequence belongs to the protein-tyrosine phosphatase family. Non-receptor class myotubularin subfamily. As to quaternary structure, forms heterodimers with MTMR4 that recruit both CEP55 and PLK1; occurs during early mitosis, regulates the phosphorylation of CEP55 by PLK1 and its recruitment to the midbody where it mediates cell abscission.

It is found in the cytoplasm. The protein resides in the cytosol. The protein localises to the membrane. The enzyme catalyses a 1,2-diacyl-sn-glycero-3-phospho-(1D-myo-inositol-3,5-bisphosphate) + H2O = a 1,2-diacyl-sn-glycero-3-phospho-(1D-myo-inositol-5-phosphate) + phosphate. The catalysed reaction is a 1,2-diacyl-sn-glycero-3-phospho-(1D-myo-inositol-3-phosphate) + H2O = a 1,2-diacyl-sn-glycero-3-phospho-(1D-myo-inositol) + phosphate. It carries out the reaction 1,2-dihexadecanoyl-sn-glycero-3-phospho-(1D-myo-inositol-3-phosphate) + H2O = 1,2-dihexadecanoyl-sn-glycero-3-phospho-(1D-myo-inositol) + phosphate. It catalyses the reaction 1,2-dioctanoyl-sn-glycero-3-phospho-(1-D-myo-inositol-3-phosphate) + H2O = 1,2-dioctanoyl-sn-glycero-3-phospho-(1D-myo-inositol) + phosphate. The enzyme catalyses 1,2-dihexadecanoyl-sn-glycero-3-phospho-(1D-myo-inositol-3,5-phosphate) + H2O = 1,2-dihexadecanoyl-sn-glycero-3-phospho-(1D-myo-inositol-5-phosphate) + phosphate. Functionally, lipid phosphatase that specifically dephosphorylates the D-3 position of phosphatidylinositol 3-phosphate and phosphatidylinositol 3,5-bisphosphate, generating phosphatidylinositol and phosphatidylinositol 5-phosphate. Decreases the levels of phosphatidylinositol 3-phosphate, a phospholipid found in cell membranes where it acts as key regulator of both cell signaling and intracellular membrane traffic. Could also have a molecular sequestering/adapter activity and regulate biological processes independently of its phosphatase activity. It includes the regulation of midbody abscission during mitotic cytokinesis. This Rattus norvegicus (Rat) protein is Phosphatidylinositol-3,5-bisphosphate 3-phosphatase MTMR3.